Reading from the N-terminus, the 554-residue chain is Asparagine synthetase B [glutamine-hydrolyzing] (554 aa).

C2 (for GATase activity) is an active-site residue. In terms of domain architecture, Glutamine amidotransferase type-2 spans 2–186 (CSIFGVFDIK…AGSYLWSQDG (185 aa)). Residues 50–54 (RLSIV), 75–77 (NGE), and D99 each bind L-glutamine. ATP contacts are provided by residues L233, V273, and 347–348 (SG).

Belongs to the asparagine synthetase family. In terms of assembly, homodimer.

It carries out the reaction L-aspartate + L-glutamine + ATP + H2O = L-asparagine + L-glutamate + AMP + diphosphate + H(+). It functions in the pathway amino-acid biosynthesis; L-asparagine biosynthesis; L-asparagine from L-aspartate (L-Gln route): step 1/1. Glutamine-dependent asparagine synthesis activity can be inhibited by aspartic acid analogs (such as a sulfinate derivative and (2S,3R)-2-amino-3-methylsuccinate) in vitro; the inhibition is competitive with respect to aspartate. In terms of biological role, catalyzes the ATP-dependent conversion of aspartate into asparagine, using glutamine as a source of nitrogen. Can also use ammonia as the nitrogen source in vitro, albeit with lower efficiency. As nucleotide substrates, ATP and dATP are utilized at a similar rate in both the glutamine- and ammonia-dependent reactions, whereas GTP utilization is only 15% that of ATP, and CTP, UTP, ITP and XTP are very poor or not substrates. Also exhibits glutaminase activity. The sequence is that of Asparagine synthetase B [glutamine-hydrolyzing] (asnB) from Escherichia coli (strain K12).